Reading from the N-terminus, the 929-residue chain is Protocadherin gamma-B3 (929 aa).

Positions 1–30 (MGNSSGWRGPAGQRRMLFLFLLSLLDQALS) are cleaved as a signal peptide. 6 consecutive Cadherin domains span residues 31–133 (EPIR…PPTF), 134–242 (SQNI…PPVF), 243–347 (TQDM…APEI), 348–452 (TLAS…VPVF), 453–562 (HQAS…APLV), and 570–675 (EGSA…QPDL). Topologically, residues 31–691 (EPIRYAIPEE…SDPQAELQFH (661 aa)) are extracellular. Asn136 carries an N-linked (GlcNAc...) asparagine glycan. Asn419 and Asn545 each carry an N-linked (GlcNAc...) asparagine glycan. Residues 692–712 (LVVALALISVLFLLAVILAIS) form a helical membrane-spanning segment. Over 713-929 (LRLRCSSRPA…KKKSGKKEKK (217 aa)) the chain is Cytoplasmic. Disordered stretches follow at residues 791–838 (NDNP…WPNN) and 899–929 (ATLTNAAGKRDGKAPAGGNGNKKKSGKKEKK). A compositionally biased stretch (basic residues) spans 919 to 929 (NKKKSGKKEKK).

It is found in the cell membrane. Potential calcium-dependent cell-adhesion protein. May be involved in the establishment and maintenance of specific neuronal connections in the brain. In Homo sapiens (Human), this protein is Protocadherin gamma-B3 (PCDHGB3).